We begin with the raw amino-acid sequence, 616 residues long: Probable Xaa-Pro aminopeptidase P (616 aa).

Mn(2+) is bound by residues D413, D424, E522, and E536.

Belongs to the peptidase M24B family. Mn(2+) is required as a cofactor.

The enzyme catalyses Release of any N-terminal amino acid, including proline, that is linked to proline, even from a dipeptide or tripeptide.. In terms of biological role, catalyzes the removal of a penultimate prolyl residue from the N-termini of peptides. This chain is Probable Xaa-Pro aminopeptidase P (AMPP), found in Paracoccidioides brasiliensis (strain Pb03).